The chain runs to 296 residues: Diguanylate cyclase DgcZ (296 aa).

Residues His22, Cys52, His79, and His83 each coordinate Zn(2+). The 133-residue stretch at 157-289 (LNLYLMLLDI…GRNRCMFIDE (133 aa)) folds into the GGDEF domain. 2 residues coordinate Mg(2+): Asp165 and Ile166. Substrate contacts are provided by residues Asn173, His178, Asp182, and 195 to 200 (WTRDYE). Glu208 is a binding site for Mg(2+). Glu208 (proton acceptor) is an active-site residue. Substrate contacts are provided by Lys215, Arg224, and Arg228.

In terms of assembly, homodimer. Mg(2+) is required as a cofactor.

It carries out the reaction 2 GTP = 3',3'-c-di-GMP + 2 diphosphate. Its pathway is purine metabolism; 3',5'-cyclic di-GMP biosynthesis. Its activity is regulated as follows. Allosterically regulated by zinc, which seems to regulate the activity of the catalytic GGDEF domains by impeding their mobility and thus preventing productive encounter of the two GTP substrates. Subject to product inhibition by c-di-GMP at a KI of 44 uM. In terms of biological role, catalyzes the synthesis of cyclic-di-GMP (c-di-GMP) via the condensation of 2 GTP molecules. May act as a zinc sensor that controls, via c-di-GMP, post-translational events. Overexpression leads to a strong repression of swimming; swimming returnes to normal when residues 206-207 are both mutated to Ala. Overexpression also leads to a reduction in flagellar abundance and a 20-fold increase in c-di-GMP levels in vivo. Required for aminoglycoside-mediated induction of biofilm formation, it also plays a lesser role in biofilm production in response to other classes of translation inhibitors. The c-di-GMP produced by this enzyme up-regulates poly-GlcNAc production as well as the biofilm synthesis protein PgaD, although c-di-GMP is probably not the main inducing principle. C-di-GMP is a second messenger which controls cell surface-associated traits in bacteria. This is Diguanylate cyclase DgcZ from Escherichia coli (strain K12).